The following is a 476-amino-acid chain: NADH-quinone oxidoreductase subunit N (476 aa).

The next 13 helical transmembrane spans lie at 7–27 (LTVE…GLLV), 33–53 (RGIA…AFGM), 59–79 (VVLG…LFLV), 100–120 (GEYY…ASSG), 122–142 (LVSL…LAAF), 156–176 (YVLL…LVYG), 199–219 (LLLG…AVPF), 237–257 (FLSV…FFGA), 265–285 (WVQL…LVAI), 305–325 (LLLG…YYAM), 363–383 (VAAL…MAGF), 399–419 (IWLA…YLLV), and 437–457 (VAPG…ILGI).

This sequence belongs to the complex I subunit 2 family. NDH-1 is composed of 14 different subunits. Subunits NuoA, H, J, K, L, M, N constitute the membrane sector of the complex.

It is found in the cell membrane. It carries out the reaction a quinone + NADH + 5 H(+)(in) = a quinol + NAD(+) + 4 H(+)(out). Functionally, NDH-1 shuttles electrons from NADH, via FMN and iron-sulfur (Fe-S) centers, to quinones in the respiratory chain. The immediate electron acceptor for the enzyme in this species is believed to be a menaquinone. Couples the redox reaction to proton translocation (for every two electrons transferred, four hydrogen ions are translocated across the cytoplasmic membrane), and thus conserves the redox energy in a proton gradient. This is NADH-quinone oxidoreductase subunit N from Moorella thermoacetica (strain ATCC 39073 / JCM 9320).